We begin with the raw amino-acid sequence, 854 residues long: Selenocysteine insertion sequence-binding protein 2 (854 aa).

Disordered regions lie at residues 332-351 (ADPK…DPSY), 356-394 (HIIH…KYEV), 417-445 (ERRD…KKSQ), and 488-619 (ECAS…PNHT). 2 stretches are compositionally biased toward polar residues: residues 338–350 (SIPS…SDPS) and 361–372 (TQKSKASQGSDL). The short motif at 380–387 (KNKKKKEK) is the Nuclear localization signal element. Over residues 426 to 445 (KFQSKQQPQDNFKNNVKKSQ) the composition is skewed to polar residues. The span at 536–547 (ILKERQERKQRL) shows a compositional bias: basic and acidic residues. Over residues 548 to 559 (QENAVSPAFTSD) the composition is skewed to polar residues. Over residues 560 to 572 (DTQDGESGGDDQF) the composition is skewed to acidic residues. Residues 593-611 (VEDKSEEPPGTELQRDTEA) are compositionally biased toward basic and acidic residues. Positions 673–694 (LVLGLREVLKHLKLKKLKCVII) are RNA-binding. Positions 787-812 (EPRPQAPPSLPTQGPSCPAEDGPPAL) are disordered.

Expressed at high levels in testis.

The protein resides in the nucleus. Its subcellular location is the mitochondrion. MRNA-binding protein that binds to the SECIS (selenocysteine insertion sequence) element present in the 3'-UTR of mRNAs encoding selenoproteins and facilitates the incorporation of the rare amino acid selenocysteine. Insertion of selenocysteine at UGA codons is mediated by SECISBP2 and EEFSEC: SECISBP2 (1) specifically binds the SECIS sequence once the 80S ribosome encounters an in-frame UGA codon and (2) contacts the RPS27A/eS31 of the 40S ribosome before ribosome stalling. (3) GTP-bound EEFSEC then delivers selenocysteinyl-tRNA(Sec) to the 80S ribosome and adopts a preaccommodated state conformation. (4) After GTP hydrolysis, EEFSEC dissociates from the assembly, selenocysteinyl-tRNA(Sec) accommodates, and peptide bond synthesis and selenoprotein elongation occur. In Homo sapiens (Human), this protein is Selenocysteine insertion sequence-binding protein 2.